Reading from the N-terminus, the 71-residue chain is Large ribosomal subunit protein bL32c (71 aa).

Residues 1 to 24 are disordered; it reads MAVPKKRTSRSKKKIRKNVRKGKK.

The protein belongs to the bacterial ribosomal protein bL32 family.

The protein resides in the plastid. It localises to the chloroplast. This is Large ribosomal subunit protein bL32c from Pinus koraiensis (Korean pine).